The sequence spans 220 residues: Protein-L-isoaspartate O-methyltransferase (220 aa).

Residue serine 68 is part of the active site.

It belongs to the methyltransferase superfamily. L-isoaspartyl/D-aspartyl protein methyltransferase family.

It localises to the cytoplasm. It carries out the reaction [protein]-L-isoaspartate + S-adenosyl-L-methionine = [protein]-L-isoaspartate alpha-methyl ester + S-adenosyl-L-homocysteine. Its function is as follows. Catalyzes the methyl esterification of L-isoaspartyl residues in peptides and proteins that result from spontaneous decomposition of normal L-aspartyl and L-asparaginyl residues. It plays a role in the repair and/or degradation of damaged proteins. This Dictyoglomus thermophilum (strain ATCC 35947 / DSM 3960 / H-6-12) protein is Protein-L-isoaspartate O-methyltransferase.